Reading from the N-terminus, the 314-residue chain is tRNA dimethylallyltransferase (314 aa).

10–17 contributes to the ATP binding site; sequence GPTAVGKT. 12–17 lines the substrate pocket; sequence TAVGKT. 4 interaction with substrate tRNA regions span residues 35–38, 160–164, 239–244, and 272–279; these read DSMQ, RRVIR, QAIGYK, and KRQLTWFR.

This sequence belongs to the IPP transferase family. Monomer. Mg(2+) serves as cofactor.

It catalyses the reaction adenosine(37) in tRNA + dimethylallyl diphosphate = N(6)-dimethylallyladenosine(37) in tRNA + diphosphate. Functionally, catalyzes the transfer of a dimethylallyl group onto the adenine at position 37 in tRNAs that read codons beginning with uridine, leading to the formation of N6-(dimethylallyl)adenosine (i(6)A). This Halalkalibacterium halodurans (strain ATCC BAA-125 / DSM 18197 / FERM 7344 / JCM 9153 / C-125) (Bacillus halodurans) protein is tRNA dimethylallyltransferase (miaA).